Reading from the N-terminus, the 238-residue chain is Ditrans,polycis-undecaprenyl-diphosphate synthase ((2E,6E)-farnesyl-diphosphate specific) (238 aa).

Residue Asp14 is part of the active site. Asp14 contacts Mg(2+). Substrate-binding positions include 15–18 (GNGR), Trp19, Arg27, His31, and 59–61 (SSE). Asn62 functions as the Proton acceptor in the catalytic mechanism. Substrate-binding positions include Trp63, Arg65, Arg182, and 188 to 190 (RIS). Glu201 is a Mg(2+) binding site.

This sequence belongs to the UPP synthase family. Homodimer. It depends on Mg(2+) as a cofactor.

It carries out the reaction 8 isopentenyl diphosphate + (2E,6E)-farnesyl diphosphate = di-trans,octa-cis-undecaprenyl diphosphate + 8 diphosphate. Its function is as follows. Catalyzes the sequential condensation of isopentenyl diphosphate (IPP) with (2E,6E)-farnesyl diphosphate (E,E-FPP) to yield (2Z,6Z,10Z,14Z,18Z,22Z,26Z,30Z,34E,38E)-undecaprenyl diphosphate (di-trans,octa-cis-UPP). UPP is the precursor of glycosyl carrier lipid in the biosynthesis of bacterial cell wall polysaccharide components such as peptidoglycan and lipopolysaccharide. The protein is Ditrans,polycis-undecaprenyl-diphosphate synthase ((2E,6E)-farnesyl-diphosphate specific) of Legionella pneumophila subsp. pneumophila (strain Philadelphia 1 / ATCC 33152 / DSM 7513).